The primary structure comprises 139 residues: ATP synthase epsilon chain (139 aa).

Belongs to the ATPase epsilon chain family. As to quaternary structure, F-type ATPases have 2 components, CF(1) - the catalytic core - and CF(0) - the membrane proton channel. CF(1) has five subunits: alpha(3), beta(3), gamma(1), delta(1), epsilon(1). CF(0) has three main subunits: a, b and c.

It localises to the cell inner membrane. Functionally, produces ATP from ADP in the presence of a proton gradient across the membrane. This is ATP synthase epsilon chain from Pseudomonas syringae pv. tomato (strain ATCC BAA-871 / DC3000).